A 695-amino-acid polypeptide reads, in one-letter code: Centrosomal protein kizuna (695 aa).

Gly residues predominate over residues 1–12 (MPRGRGGGGGGL). The interval 1–24 (MPRGRGGGGGGLRQASATSAPLAS) is disordered. Over residues 15 to 24 (ASATSAPLAS) the composition is skewed to low complexity. 2 coiled-coil regions span residues 29-57 (ERVGQLQQALRDSEKKRLDLEDKLYEYNK) and 102-132 (VEHLTTNTEKLQKLKTEYEAEVKRMRLLSKD). 4 disordered regions span residues 261–313 (EIGS…SDRE), 351–391 (HSAW…SDLT), 444–465 (QSFPDSKREPSPDSPRQPEKVP), and 633–695 (SEAS…FYDT). Polar residues-rich tracts occupy residues 263-274 (GSSTQHSKSNLS) and 282-297 (LHSSLQERLSPENSIT). 2 stretches are compositionally biased toward basic and acidic residues: residues 299-313 (LKCDSSSRSEGSDRE) and 360-377 (DLDHGDSKSQKAVLKHEE). Residues 382-391 (GSSCSSSDLT) show a composition bias toward low complexity. Thr-391 bears the Phosphothreonine; by PLK1 mark. Residues 448 to 465 (DSKREPSPDSPRQPEKVP) are compositionally biased toward basic and acidic residues. Over residues 633–645 (SEASFSSSEGSPL) the composition is skewed to low complexity. Phosphoserine is present on residues Ser-667, Ser-670, and Ser-672. A compositionally biased stretch (basic and acidic residues) spans 676–686 (AALRPRDHDMP).

This sequence belongs to the kizuna family. As to quaternary structure, interacts with AKAP9, CEP72, ODF2, PCNT and TUBGCP2. Post-translationally, phosphorylation at Thr-391 by PLK1 is not needed for centrosomal localization or pericentriolar material expansion but is indispensable for spindle-pole stabilization.

It localises to the cytoplasm. The protein localises to the cytoskeleton. The protein resides in the microtubule organizing center. Its subcellular location is the centrosome. It is found in the cilium basal body. In terms of biological role, centrosomal protein required for establishing a robust mitotic centrosome architecture that can endure the forces that converge on the centrosomes during spindle formation. Required for stabilizing the expanded pericentriolar material around the centriole. This is Centrosomal protein kizuna (Kiz) from Mus musculus (Mouse).